The primary structure comprises 1174 residues: MNATDAESRKPENKPSSESSSSGSTSGSSDGEVSSKTYFKNNKSKVLSGQREVVLEVVRDLSYTICKEAEEKLVERFPRKDGSNEMLPKEDSINTNHNYTTDSNEHPVELTTKTEECKNTEKTKKKSFVRALSKDKQLSAYRSRSRSTRLSYSGHISRTHSVEKSLSRYKTSVLRNRRTSFGHGRDSSTTKRSVSRDKDNRLRRRIGSSRSHTRSHSRFRRSEKKLPSRSPRRIRSQERRHERRRSMSSDYERIALRRSEPIKRRDKDEFFKNNKKVSGDIKKGKGNDNGTVAELEAKITERQRKSLDILTSRTGGACLTPDKLRMIQAEITDKSSAAYQSIAREALKKYIHGYINKVNVDSVAVITRKLLKDNIVRGRGVLCHSIIQAQATSPTFTHVYAAMVAIINSKFPNIGELLLKRLVIQFKRAFGCNDKTVCLTSSHFIAHLVNQRVAHEILALEILTLLIESPTDDNVEVAITFLKECGMKLTEVSSDRVGGIFELLKNILHQGKLDKRVQYMIKVLFQVRRDGFKDHQSIIESLELVEEYAQFTHLLLLEDVTYPKDILNEFRFDDQYETNEEKYKALSKNILGSHASDSDGSFGSGSNSETALSDCDKGKNEVNDKYTSGDIIDETKPNLIALRRTIYLTLNSCLDYEECAQKLMKMQLKTCQQNEFCQILLDCCAEQRTYEKFYGLLTHRICKMNKSFIEPFKEIFKDICQTTHCLDTNRLRNISKFFAHLLFTDAISWDVLDCIKLTEDEAITSRCIFIKSFFQELVEYMGLYHFNKKLKTEVLAGTLAGLFPKDNPRNIRFSINFFTSIGLGGITNELCQLLKIAPKSAPSSSSSSSLSSELSAPSDDDSSSDSENKKKHKGKNKKMTKKKNPSKKKEKTKKIVGKNKIAAKNKTIKRRTDKDNSSSKDNFLKSESSSNESISLDSLSSELFAPSSYSSSESSNDSESKEKHKGKNKKMTKKKNPSNKREKTKKKLSKNKKAPNKNTKKRMTEKDISSSESSISESKSLNCSASNQNENEKRKKRVTSKSRTKRVKMFKQCQWVDADNQRDIKRKKRAEYRYEPLVYRKRNEECLKKGAPNCRKDNYGNRQNHEISQRHDSEIKRRREERKKRHHEKNHSREYKRSKLGLCQREYFLYMCCQFYYPCTFQCLCQNCHFTFYS.

Residues 1-15 (MNATDAESRKPENKP) are compositionally biased toward basic and acidic residues. 3 disordered regions span residues 1–51 (MNAT…SGQR), 80–109 (KDGSNEMLPKEDSINTNHNYTTDSNEHPVE), and 136–259 (KQLS…LRRS). Residues 16 to 35 (SSESSSSGSTSGSSDGEVSS) show a composition bias toward low complexity. The segment covering 36–47 (KTYFKNNKSKVL) has biased composition (polar residues). Basic and acidic residues predominate over residues 80–92 (KDGSNEMLPKEDS). Polar residues predominate over residues 93–102 (INTNHNYTTD). Low complexity predominate over residues 138 to 153 (LSAYRSRSRSTRLSYS). Over residues 183–200 (HGRDSSTTKRSVSRDKDN) the composition is skewed to basic and acidic residues. A compositionally biased stretch (basic residues) spans 201–223 (RLRRRIGSSRSHTRSHSRFRRSE). The segment covering 235 to 259 (RSQERRHERRRSMSSDYERIALRRS) has biased composition (basic and acidic residues). The MIF4G domain maps to 348 to 531 (KKYIHGYINK…KVLFQVRRDG (184 aa)). A compositionally biased stretch (low complexity) spans 597-608 (DSDGSFGSGSNS). Residues 597–616 (DSDGSFGSGSNSETALSDCD) form a disordered region. One can recognise an MI domain in the interval 641–757 (ALRRTIYLTL…SWDVLDCIKL (117 aa)). The segment covering 840–857 (SAPSSSSSSSLSSELSAP) has biased composition (low complexity). 2 disordered regions span residues 840–1045 (SAPS…SRTK) and 1095–1133 (RKDNYGNRQNHEISQRHDSEIKRRREERKKRHHEKNHSR). Over residues 869 to 909 (KKKHKGKNKKMTKKKNPSKKKEKTKKIVGKNKIAAKNKTIK) the composition is skewed to basic residues. Residues 910–924 (RRTDKDNSSSKDNFL) are compositionally biased toward basic and acidic residues. Positions 926 to 957 (SESSSNESISLDSLSSELFAPSSYSSSESSND) are enriched in low complexity. Residues 963–1001 (KHKGKNKKMTKKKNPSNKREKTKKKLSKNKKAPNKNTKK) are compositionally biased toward basic residues. A compositionally biased stretch (low complexity) spans 1010–1020 (SSESSISESKS). Positions 1034–1045 (RKKRVTSKSRTK) are enriched in basic residues. The span at 1095–1118 (RKDNYGNRQNHEISQRHDSEIKRR) shows a compositional bias: basic and acidic residues. Basic residues predominate over residues 1119 to 1130 (REERKKRHHEKN).

Belongs to the CWC22 family. Component of the spliceosome C complex.

Its subcellular location is the nucleus speckle. Functionally, male determiner protein (M-factor) that controls male somatic sexual differentiation. Acts as a dominant factor that regulates the mRNA splicing of transformer (tra) and doublesex (dsx) transcripts and promotes expression of male splice forms of tra and dsx. Probably acts as a component of the spliceosome C complex required for mRNA splicing factor and exon-junction complex (EJC) assembly. Hinders eIF4AIII from non-specifically binding RNA and escorts it to the splicing machinery to promote EJC assembly on mature mRNAs. This Musca domestica (House fly) protein is Male determiner protein Mdmd(II).